A 293-amino-acid chain; its full sequence is Ribosomal protein L11 methyltransferase (293 aa).

S-adenosyl-L-methionine is bound by residues Thr-145, Gly-166, Asp-188, and Asn-230.

It belongs to the methyltransferase superfamily. PrmA family.

It localises to the cytoplasm. It catalyses the reaction L-lysyl-[protein] + 3 S-adenosyl-L-methionine = N(6),N(6),N(6)-trimethyl-L-lysyl-[protein] + 3 S-adenosyl-L-homocysteine + 3 H(+). In terms of biological role, methylates ribosomal protein L11. This is Ribosomal protein L11 methyltransferase from Actinobacillus pleuropneumoniae serotype 7 (strain AP76).